We begin with the raw amino-acid sequence, 423 residues long: NDP-N-acetyl-D-galactosaminuronic acid dehydrogenase (423 aa).

T11 to L28 contributes to the NAD(+) binding site. The active-site Proton donor/acceptor is the K218. The active-site Nucleophile is C272.

Belongs to the UDP-glucose/GDP-mannose dehydrogenase family.

Its function is as follows. Probably involved in synthesis of sugar components of EPS I, by converting NDP-N-acetyl-D-galactosamine into NDP-N-acetyl-D-galactosaminuronic acid. This chain is NDP-N-acetyl-D-galactosaminuronic acid dehydrogenase (epsD), found in Ralstonia solanacearum (Pseudomonas solanacearum).